Reading from the N-terminus, the 248-residue chain is tRNA pseudouridine synthase A (248 aa).

Aspartate 53 serves as the catalytic Nucleophile. A substrate-binding site is contributed by tyrosine 111.

Belongs to the tRNA pseudouridine synthase TruA family. Homodimer.

The enzyme catalyses uridine(38/39/40) in tRNA = pseudouridine(38/39/40) in tRNA. Its function is as follows. Formation of pseudouridine at positions 38, 39 and 40 in the anticodon stem and loop of transfer RNAs. In Listeria innocua serovar 6a (strain ATCC BAA-680 / CLIP 11262), this protein is tRNA pseudouridine synthase A.